We begin with the raw amino-acid sequence, 350 residues long: MLATADMSDGYTNGARLKISTSSKPKFHFIAGLASGLSSAILLQPADLLKTRIQQAHQTSALLFTIRKILASPQPIRGLWRGTLPSALRTGFGSALYFSSLNALRQCIANQGALVPLHGDRDDKRTRTSALPKLSHTANLLTGAMARTAAGFIMMPVTVIKVRYESDYYAYRSIWGAGRDIVRSEGFRGLFSGFGATAIRDAPYAGLYVVFYEQSKKNLNALNFGGLTTARPLSDEPAREDNSEKQLVTSSISVNFVSGALAAGLATSITNPFDVVKTRLQLMPNKYRNMAHAVRLVLREDGVRSLFGGLGLRMGRKAISSALAWTVYEELILKAEKRWPDQDNIEQLTP.

Solcar repeat units lie at residues 23 to 107, 134 to 218, and 250 to 334; these read SKPK…LRQC, LSHT…SKKN, and SSIS…LILK. Transmembrane regions (helical) follow at residues 29 to 54, 82 to 108, 140 to 165, 193 to 216, 254 to 280, and 309 to 327; these read FIAG…TRIQ, GTLP…RQCI, LLTG…VRYE, GFGA…EQSK, VNFV…KTRL, and GLGL…AWTV.

It belongs to the mitochondrial carrier (TC 2.A.29) family. SLC25A38 subfamily.

Its subcellular location is the mitochondrion inner membrane. It catalyses the reaction glycine(in) = glycine(out). Functionally, mitochondrial glycine transporter that imports glycine into the mitochondrial matrix. Plays an important role in providing glycine for the first enzymatic step in heme biosynthesis, the condensation of glycine with succinyl-CoA to produce 5-aminolevulinate (ALA) in the mitochondrial matrix. The polypeptide is Mitochondrial glycine transporter (Ajellomyces capsulatus (strain NAm1 / WU24) (Darling's disease fungus)).